A 160-amino-acid polypeptide reads, in one-letter code: SsrA-binding protein (160 aa).

The disordered stretch occupies residues 131-160 (KKEFDKRHTEKERDSDREIQRAMRTKGKDD).

Belongs to the SmpB family.

The protein resides in the cytoplasm. Its function is as follows. Required for rescue of stalled ribosomes mediated by trans-translation. Binds to transfer-messenger RNA (tmRNA), required for stable association of tmRNA with ribosomes. tmRNA and SmpB together mimic tRNA shape, replacing the anticodon stem-loop with SmpB. tmRNA is encoded by the ssrA gene; the 2 termini fold to resemble tRNA(Ala) and it encodes a 'tag peptide', a short internal open reading frame. During trans-translation Ala-aminoacylated tmRNA acts like a tRNA, entering the A-site of stalled ribosomes, displacing the stalled mRNA. The ribosome then switches to translate the ORF on the tmRNA; the nascent peptide is terminated with the 'tag peptide' encoded by the tmRNA and targeted for degradation. The ribosome is freed to recommence translation, which seems to be the essential function of trans-translation. The chain is SsrA-binding protein from Stutzerimonas stutzeri (strain A1501) (Pseudomonas stutzeri).